A 275-amino-acid chain; its full sequence is 2,3,4,5-tetrahydropyridine-2,6-dicarboxylate N-succinyltransferase (275 aa).

Substrate-binding residues include Arg-106 and Asp-143.

It belongs to the transferase hexapeptide repeat family. Homotrimer.

The protein resides in the cytoplasm. It carries out the reaction (S)-2,3,4,5-tetrahydrodipicolinate + succinyl-CoA + H2O = (S)-2-succinylamino-6-oxoheptanedioate + CoA. It participates in amino-acid biosynthesis; L-lysine biosynthesis via DAP pathway; LL-2,6-diaminopimelate from (S)-tetrahydrodipicolinate (succinylase route): step 1/3. In Paraburkholderia xenovorans (strain LB400), this protein is 2,3,4,5-tetrahydropyridine-2,6-dicarboxylate N-succinyltransferase.